The sequence spans 303 residues: Pyridoxal 5'-phosphate synthase subunit PdxS (303 aa).

Aspartate 33 contacts D-ribose 5-phosphate. Catalysis depends on lysine 90, which acts as the Schiff-base intermediate with D-ribose 5-phosphate. Glycine 162 contributes to the D-ribose 5-phosphate binding site. Arginine 174 is a D-glyceraldehyde 3-phosphate binding site. Residues glycine 223 and 244-245 contribute to the D-ribose 5-phosphate site; that span reads GS.

This sequence belongs to the PdxS/SNZ family. In the presence of PdxT, forms a dodecamer of heterodimers.

It carries out the reaction aldehydo-D-ribose 5-phosphate + D-glyceraldehyde 3-phosphate + L-glutamine = pyridoxal 5'-phosphate + L-glutamate + phosphate + 3 H2O + H(+). It functions in the pathway cofactor biosynthesis; pyridoxal 5'-phosphate biosynthesis. Its function is as follows. Catalyzes the formation of pyridoxal 5'-phosphate from ribose 5-phosphate (RBP), glyceraldehyde 3-phosphate (G3P) and ammonia. The ammonia is provided by the PdxT subunit. Can also use ribulose 5-phosphate and dihydroxyacetone phosphate as substrates, resulting from enzyme-catalyzed isomerization of RBP and G3P, respectively. This chain is Pyridoxal 5'-phosphate synthase subunit PdxS, found in Mycolicibacterium smegmatis (strain ATCC 700084 / mc(2)155) (Mycobacterium smegmatis).